We begin with the raw amino-acid sequence, 279 residues long: Mirror-image polydactyly gene 1 protein homolog (279 aa).

Residues 1 to 11 (MNSEQSIRELG) are compositionally biased toward basic and acidic residues. Positions 1–21 (MNSEQSIRELGNEVPSEDLEL) are disordered. 2 coiled-coil regions span residues 65 to 169 (LNKE…MLEN) and 218 to 255 (AEEM…STNN). The interval 247-268 (KQNQTSTNNTKHPTAKNNQEHT) is disordered. Polar residues predominate over residues 248–263 (QNQTSTNNTKHPTAKN).

This chain is Mirror-image polydactyly gene 1 protein homolog (Mipol1), found in Mus musculus (Mouse).